The chain runs to 305 residues: Ribosomal RNA small subunit methyltransferase H (305 aa).

Residues 49–51 (GGH), aspartate 68, phenylalanine 100, aspartate 116, and glutamine 123 contribute to the S-adenosyl-L-methionine site.

Belongs to the methyltransferase superfamily. RsmH family.

It localises to the cytoplasm. The enzyme catalyses cytidine(1402) in 16S rRNA + S-adenosyl-L-methionine = N(4)-methylcytidine(1402) in 16S rRNA + S-adenosyl-L-homocysteine + H(+). Specifically methylates the N4 position of cytidine in position 1402 (C1402) of 16S rRNA. The protein is Ribosomal RNA small subunit methyltransferase H of Synechocystis sp. (strain ATCC 27184 / PCC 6803 / Kazusa).